The sequence spans 214 residues: ATP synthase subunit 5, mitochondrial (214 aa).

The transit peptide at 1–24 (MFASRAIRMMSMRPMARTMATKAA) directs the protein to the mitochondrion.

F-type ATP synthases have 2 components, the catalytic core F(1) and the membrane-embedded component F(0), linked together by a central stalk and a peripheral stalk. The central stalk, also called rotor shaft, is often seen as part of F(1). The peripheral stalk is seen as part of F(0). F(0) contains the membrane channel next to the rotor. F-type ATP synthases form dimers but each monomer functions independently in ATP generation. The dimer consists of 17 different polypeptides: ATP1 (subunit alpha, 3 molecules per monomer, part of F(1)), ATP2 (subunit beta, 3 copies per monomer, part of F(1)), ATP3 (subunit gamma, part of the central stalk), ATP4 (subunit b, part of the peripheral stalk), ATP5/OSCP (subunit 5/OSCP, part of the peripheral stalk), ATP6 (subunit a, part of the peripheral stalk), ATP7 (subunit d, part of the peripheral stalk), ATP8 (subunit 8, part of the peripheral stalk), OLI1 (subunit c, part of the rotor, 10 molecules per monomer), ATP14 (subunit h, part of the peripheral stalk), ATP15 (subunit epsilon, part of the central stalk), ATP16 (subunit delta, part of the central stalk), ATP17 (subunit f, part of the peripheral stalk), ATP18 (subunit i/j, part of the peripheral stalk), ATP19 (subunit k, dimer-specific, at interface between monomers), ATP20 (subunit g, at interface between monomers), TIM11 (subunit e, at interface between monomers).

The protein resides in the mitochondrion inner membrane. In terms of biological role, mitochondrial membrane ATP synthase (F(1)F(0) ATP synthase or Complex V) produces ATP from ADP in the presence of a proton gradient across the membrane which is generated by electron transport complexes of the respiratory chain. F-type ATP synthases consist of two structural domains, F(1) - containing the extramembraneous catalytic core, and F(0) - containing the membrane proton channel, linked together by a central stalk and a peripheral stalk. During catalysis, ATP synthesis in the catalytic domain of F(1) is coupled via a rotary mechanism of the central stalk subunits to proton translocation. Part of the complex F(0) domain and the peripheral stalk, which acts as a stator to hold the catalytic alpha/ATP1(3)beta/ATP2(3) subcomplex and subunit a/ATP6 static relative to the rotary elements. This chain is ATP synthase subunit 5, mitochondrial, found in Yarrowia lipolytica (strain CLIB 122 / E 150) (Yeast).